Here is a 182-residue protein sequence, read N- to C-terminus: UPF0690 protein C1orf52 (182 aa).

2 disordered regions span residues 1–67 (MAAE…RSVT) and 100–182 (WKSN…KKKK). Residues 23–32 (SDEEDNIEPE) show a composition bias toward acidic residues. Residues 50 to 63 (NKAEKRLPGPDELF) are compositionally biased toward basic and acidic residues. Thr-67 carries the phosphothreonine modification. The residue at position 132 (Tyr-132) is a Phosphotyrosine. Over residues 151 to 162 (EGEETLESDDEK) the composition is skewed to acidic residues. Position 158 is a phosphoserine (Ser-158). A compositionally biased stretch (basic and acidic residues) spans 172–182 (VEPGEPAKKKK).

It belongs to the UPF0690 family. As to expression, expressed in all tissues tested including heart, placenta, liver, skeletal muscle, kidney and pancreas. Weak expression in brain and lung.

The protein is UPF0690 protein C1orf52 (C1orf52) of Homo sapiens (Human).